The primary structure comprises 118 residues: MAMANHRIDRVGMEIKREVNDILQKKVRDPRVQGVTITEVQMQGDLSLAKVYYTIMSDLASDNQKAQTGLEKATGTIKRELGKQLTMYKIPDLVFEKDNSIAYGNKIDQLLRDLDNKS.

This sequence belongs to the RbfA family. Monomer. Binds 30S ribosomal subunits, but not 50S ribosomal subunits or 70S ribosomes.

Its subcellular location is the cytoplasm. One of several proteins that assist in the late maturation steps of the functional core of the 30S ribosomal subunit. Associates with free 30S ribosomal subunits (but not with 30S subunits that are part of 70S ribosomes or polysomes). Required for efficient processing of 16S rRNA. May interact with the 5'-terminal helix region of 16S rRNA. The polypeptide is Ribosome-binding factor A (Streptococcus pyogenes serotype M1).